We begin with the raw amino-acid sequence, 85 residues long: RNA-binding protein Hfq (85 aa).

Residues 10-69 form the Sm domain; that stretch reads DPFLNILRKEHVPVSIYLVNGIKLQGQIESFDQYVVLLKNTVTQMVYKHAISTVVPARPV.

This sequence belongs to the Hfq family. As to quaternary structure, homohexamer.

RNA chaperone that binds small regulatory RNA (sRNAs) and mRNAs to facilitate mRNA translational regulation in response to envelope stress, environmental stress and changes in metabolite concentrations. Also binds with high specificity to tRNAs. The chain is RNA-binding protein Hfq from Laribacter hongkongensis (strain HLHK9).